The chain runs to 363 residues: Outer membrane porin F (363 aa).

Positions 1–22 (MMKRKILAAVIPALLAAATANA) are cleaved as a signal peptide.

The protein belongs to the Gram-negative porin family. In terms of assembly, homotrimer. Forms mixed heterotrimers with OmpC and with PhoE; other mixed heterotrimers with other porins are also probable.

Its subcellular location is the cell outer membrane. Forms pores that allow passive diffusion of small molecules across the outer membrane. The sequence is that of Outer membrane porin F from Salmonella typhimurium (strain SL1344).